The chain runs to 230 residues: Orotidine 5'-phosphate decarboxylase (230 aa).

Substrate contacts are provided by residues Asp-10, Lys-32, 59–68 (DLKFHDIPRT), Thr-116, Arg-177, Gln-186, Gly-206, and Arg-207. Residue Lys-61 is the Proton donor of the active site.

The protein belongs to the OMP decarboxylase family. Type 1 subfamily. In terms of assembly, homodimer.

The catalysed reaction is orotidine 5'-phosphate + H(+) = UMP + CO2. Its pathway is pyrimidine metabolism; UMP biosynthesis via de novo pathway; UMP from orotate: step 2/2. Functionally, catalyzes the decarboxylation of orotidine 5'-monophosphate (OMP) to uridine 5'-monophosphate (UMP). This chain is Orotidine 5'-phosphate decarboxylase, found in Methylacidiphilum infernorum (isolate V4) (Methylokorus infernorum (strain V4)).